The following is a 663-amino-acid chain: UvrABC system protein B (663 aa).

Over residues 1 to 10 (MIDKRDDKPF) the composition is skewed to basic and acidic residues. The tract at residues 1 to 23 (MIDKRDDKPFKLKSKYKPSGDQP) is disordered. Positions 31–418 (DNIEGGEKAQ…TNTIIEQIIR (388 aa)) constitute a Helicase ATP-binding domain. ATP is bound at residue 44–51 (GATGTGKT). The Beta-hairpin signature appears at 97-120 (YYDYYQPEAYVPSSDTYIEKDSSV). Positions 435–601 (QMDDLLGEIN…TIKKDIRGLI (167 aa)) constitute a Helicase C-terminal domain. The region spanning 627–662 (KEAINALQKQMQEAAELLDFELAAQMRDLILELKLM) is the UVR domain.

The protein belongs to the UvrB family. Forms a heterotetramer with UvrA during the search for lesions. Interacts with UvrC in an incision complex.

It localises to the cytoplasm. Functionally, the UvrABC repair system catalyzes the recognition and processing of DNA lesions. A damage recognition complex composed of 2 UvrA and 2 UvrB subunits scans DNA for abnormalities. Upon binding of the UvrA(2)B(2) complex to a putative damaged site, the DNA wraps around one UvrB monomer. DNA wrap is dependent on ATP binding by UvrB and probably causes local melting of the DNA helix, facilitating insertion of UvrB beta-hairpin between the DNA strands. Then UvrB probes one DNA strand for the presence of a lesion. If a lesion is found the UvrA subunits dissociate and the UvrB-DNA preincision complex is formed. This complex is subsequently bound by UvrC and the second UvrB is released. If no lesion is found, the DNA wraps around the other UvrB subunit that will check the other stand for damage. The sequence is that of UvrABC system protein B from Streptococcus pyogenes serotype M6 (strain ATCC BAA-946 / MGAS10394).